The following is a 322-amino-acid chain: Ribosomal RNA small subunit methyltransferase H (322 aa).

Residues 47–49 (GGH), Asp67, Phe93, Asp112, and Gln119 each bind S-adenosyl-L-methionine.

The protein belongs to the methyltransferase superfamily. RsmH family.

The protein localises to the cytoplasm. The enzyme catalyses cytidine(1402) in 16S rRNA + S-adenosyl-L-methionine = N(4)-methylcytidine(1402) in 16S rRNA + S-adenosyl-L-homocysteine + H(+). Functionally, specifically methylates the N4 position of cytidine in position 1402 (C1402) of 16S rRNA. The protein is Ribosomal RNA small subunit methyltransferase H of Stenotrophomonas maltophilia (strain K279a).